A 177-amino-acid polypeptide reads, in one-letter code: ATP synthase subunit delta (177 aa).

It belongs to the ATPase delta chain family. As to quaternary structure, F-type ATPases have 2 components, F(1) - the catalytic core - and F(0) - the membrane proton channel. F(1) has five subunits: alpha(3), beta(3), gamma(1), delta(1), epsilon(1). F(0) has three main subunits: a(1), b(2) and c(10-14). The alpha and beta chains form an alternating ring which encloses part of the gamma chain. F(1) is attached to F(0) by a central stalk formed by the gamma and epsilon chains, while a peripheral stalk is formed by the delta and b chains.

It is found in the cell inner membrane. In terms of biological role, f(1)F(0) ATP synthase produces ATP from ADP in the presence of a proton or sodium gradient. F-type ATPases consist of two structural domains, F(1) containing the extramembraneous catalytic core and F(0) containing the membrane proton channel, linked together by a central stalk and a peripheral stalk. During catalysis, ATP synthesis in the catalytic domain of F(1) is coupled via a rotary mechanism of the central stalk subunits to proton translocation. Functionally, this protein is part of the stalk that links CF(0) to CF(1). It either transmits conformational changes from CF(0) to CF(1) or is implicated in proton conduction. The polypeptide is ATP synthase subunit delta (Shewanella woodyi (strain ATCC 51908 / MS32)).